A 150-amino-acid polypeptide reads, in one-letter code: UPF0178 protein PputGB1_5282 (150 aa).

This sequence belongs to the UPF0178 family.

This Pseudomonas putida (strain GB-1) protein is UPF0178 protein PputGB1_5282.